The primary structure comprises 421 residues: MDLAVKVKKMGLGHEQGFGAPCLKCKEKCEGFELHFWRKICRNCKCGQEEHDVLLSNEEDRKVGKLFEDTKYTTLIAKLKSDGIPMYKRNVMILTNPVAAKKNVSINTVTYEWAPPVQNQALARHYMQMLPKEKQPVAGSEGAQYRKKQLAKQLPAHDQDPSKCHELSPKEVKEMEQFVKKYKSEALGVGDVKLPREMDAQGPPRIDSPGGDRSTAAAVGAMDGKSAEHRRTQYSCYCCKLSMKEGDPAIYAERAGYDKLWHPACFVCSTCEELLVDMIYFWKNGKLYCGRHYCDSEKPRCAGCDELIFSNEYTQAENQNWHLKHFCCFDCDNILAGEIYVMVDDKPVCKPCYVKNHAVVCQGCHNAIDPEVQRVTYNGFSWHAAAECFLCSCCSKCLLGQKFMPVEGMVFCSVECKKMMS.

The 108-residue stretch at 92–199 (MILTNPVAAK…GDVKLPREMD (108 aa)) folds into the PET domain. The disordered stretch occupies residues 134–164 (KQPVAGSEGAQYRKKQLAKQLPAHDQDPSKC). Over residues 155 to 164 (PAHDQDPSKC) the composition is skewed to basic and acidic residues. LIM zinc-binding domains follow at residues 234–297 (YSCY…CDSE), 299–359 (PRCA…NHAV), and 362–421 (QGCH…KMMS).

The protein belongs to the prickle / espinas / testin family. As to quaternary structure, interacts via LIM domain 1 with ZYX. Interacts (via LIM domain 3) with ENAH and VASP. Interacts with ALKBH4, talin, actin, alpha-actinin, GRIP1 and PXN. Interacts (via LIM domain 2) with ACTL7A (via N-terminus). Heterodimer with ACTL7A; the heterodimer interacts with ENAH to form a heterotrimer.

It localises to the cytoplasm. The protein resides in the cell junction. Its subcellular location is the focal adhesion. Scaffold protein that may play a role in cell adhesion, cell spreading and in the reorganization of the actin cytoskeleton. Plays a role in the regulation of cell proliferation. May act as a tumor suppressor. The chain is Testin (TES) from Rhinolophus ferrumequinum (Greater horseshoe bat).